A 394-amino-acid chain; its full sequence is NAD(P)H-quinone oxidoreductase subunit H (394 aa).

Belongs to the complex I 49 kDa subunit family. As to quaternary structure, NDH-1 can be composed of about 15 different subunits; different subcomplexes with different compositions have been identified which probably have different functions.

It is found in the cellular thylakoid membrane. It carries out the reaction a plastoquinone + NADH + (n+1) H(+)(in) = a plastoquinol + NAD(+) + n H(+)(out). The catalysed reaction is a plastoquinone + NADPH + (n+1) H(+)(in) = a plastoquinol + NADP(+) + n H(+)(out). NDH-1 shuttles electrons from an unknown electron donor, via FMN and iron-sulfur (Fe-S) centers, to quinones in the respiratory and/or the photosynthetic chain. The immediate electron acceptor for the enzyme in this species is believed to be plastoquinone. Couples the redox reaction to proton translocation, and thus conserves the redox energy in a proton gradient. Cyanobacterial NDH-1 also plays a role in inorganic carbon-concentration. This chain is NAD(P)H-quinone oxidoreductase subunit H, found in Nostoc sp. (strain PCC 7120 / SAG 25.82 / UTEX 2576).